A 367-amino-acid polypeptide reads, in one-letter code: Putative heat shock 70 kDa protein 7 (367 aa).

The protein belongs to the heat shock protein 70 family.

The protein is Putative heat shock 70 kDa protein 7 (HSPA7) of Homo sapiens (Human).